A 515-amino-acid chain; its full sequence is Elongation factor 1-alpha S (515 aa).

Positions 5 to 258 (KTHINLVVIG…DAMKPPKRPT (254 aa)) constitute a tr-type G domain. A G1 region spans residues 14-21 (GHVDAGKS). GTP is bound at residue 14-21 (GHVDAGKS). An N6,N6-dimethyllysine modification is found at Lys-55. A G2 region spans residues 70 to 74 (GITID). Residue Lys-79 is modified to N6,N6,N6-trimethyllysine. Positions 91 to 94 (DAPG) are G3. Residues 91–95 (DAPGH) and 151–154 (NKMD) each bind GTP. The segment at 151 to 154 (NKMD) is G4. The interval 187 to 206 (KKDKGDKKKGDKKEKKDKKD) is disordered. Over residues 189 to 206 (DKGDKKKGDKKEKKDKKD) the composition is skewed to basic and acidic residues. Residues 222 to 224 (SGW) are G5. An N6-methyllysine modification is found at Lys-289. The residue at position 334 (Lys-334) is an N6,N6,N6-trimethyllysine. Residues 396 to 419 (KRGKQTHDVSDDTEWATKDDAEPR) form a disordered region. The segment covering 398-419 (GKQTHDVSDDTEWATKDDAEPR) has biased composition (basic and acidic residues). The residue at position 441 (Lys-441) is an N6,N6,N6-trimethyllysine.

It belongs to the TRAFAC class translation factor GTPase superfamily. Classic translation factor GTPase family. EF-Tu/EF-1A subfamily.

It localises to the cytoplasm. Its function is as follows. This protein promotes the GTP-dependent binding of aminoacyl-tRNA to the A-site of ribosomes during protein biosynthesis. In Porphyra purpurea (Red seaweed), this protein is Elongation factor 1-alpha S (TEF-S).